The primary structure comprises 382 residues: MANVTLKPLCPLLEEMVQLPNHSNSSLRYIDHVSVLLHGLASLLGLVENGLILFVVGCRMRQTVVTTWVLHLALSDLLAAASLPFFTYFLAVGHSWELGTTFCKLHSSVFFLNMFASGFLLSAISLDRCLQVVRPVWAQNHRTVAVAHRVCLMLWALAVLNTIPYFVFRDTIPRLDGRIMCYYNLLLWNPGPDRDTTCDYRQKALAVSKFLLAFMVPLAIIASSHVAVSLRLHHRGRQRTGRFVRLVAAIVVAFVLCWGPYHIFSLLEARAHSVTTLRQLASRGLPFVTSLAFFNSVVNPLLYVFTCPDMLYKLRRSLRAVLESVLVEDSDQSGGLRNRRRRASSTATPASTLLLADRIPQLRPTRLIGWMRRGSAEVPQRV.

Residues 1–32 (MANVTLKPLCPLLEEMVQLPNHSNSSLRYIDH) lie on the Extracellular side of the membrane. Residues N3, N21, and N24 are each glycosylated (N-linked (GlcNAc...) asparagine). The helical transmembrane segment at 33–55 (VSVLLHGLASLLGLVENGLILFV) threads the bilayer. Over 56–66 (VGCRMRQTVVT) the chain is Cytoplasmic. The chain crosses the membrane as a helical span at residues 67–88 (TWVLHLALSDLLAAASLPFFTY). Over 89–105 (FLAVGHSWELGTTFCKL) the chain is Extracellular. C103 and C181 are joined by a disulfide. The helical transmembrane segment at 106–126 (HSSVFFLNMFASGFLLSAISL) threads the bilayer. The Cytoplasmic segment spans residues 127 to 145 (DRCLQVVRPVWAQNHRTVA). A helical transmembrane segment spans residues 146-167 (VAHRVCLMLWALAVLNTIPYFV). Residues 168–209 (FRDTIPRLDGRIMCYYNLLLWNPGPDRDTTCDYRQKALAVSK) lie on the Extracellular side of the membrane. Residues 210-230 (FLLAFMVPLAIIASSHVAVSL) form a helical membrane-spanning segment. Residues 231 to 246 (RLHHRGRQRTGRFVRL) are Cytoplasmic-facing. Residues 247–268 (VAAIVVAFVLCWGPYHIFSLLE) form a helical membrane-spanning segment. At 269–287 (ARAHSVTTLRQLASRGLPF) the chain is on the extracellular side. A helical membrane pass occupies residues 288–307 (VTSLAFFNSVVNPLLYVFTC). Topologically, residues 308 to 357 (PDMLYKLRRSLRAVLESVLVEDSDQSGGLRNRRRRASSTATPASTLLLAD) are cytoplasmic. Positions 329-332 (DSDQ) match the Involved in the recycling of CRTH2 motif. Phosphoserine occurs at positions 330 and 344.

It belongs to the G-protein coupled receptor 1 family. In terms of processing, phosphorylated.

It localises to the cell membrane. Its function is as follows. Receptor for prostaglandin D2 (PGD2). Coupled to the G(i)-protein. Receptor activation may result in pertussis toxin-sensitive decreases in cAMP levels and Ca(2+) mobilization. PI3K signaling is also implicated in mediating PTGDR2 effects. PGD2 induced receptor internalization. CRTH2 internalization can be regulated by diverse kinases such as, PKC, PKA, GRK2, GPRK5/GRK5 and GRK6. Receptor activation is responsible, at least in part, in immune regulation and allergic/inflammation responses. The chain is Prostaglandin D2 receptor 2 (Ptgdr2) from Mus musculus (Mouse).